A 519-amino-acid polypeptide reads, in one-letter code: Cytochrome P450 88A1 (519 aa).

A helical membrane pass occupies residues 1 to 21; it reads MLGVGMAAAVLLGAVALLLAD. C466 provides a ligand contact to heme.

This sequence belongs to the cytochrome P450 family. Requires heme as cofactor. In terms of tissue distribution, expressed in roots, developing leaves, the vegetative meristem, and suspension culture cells.

It is found in the membrane. The protein operates within plant hormone biosynthesis; gibberellin biosynthesis. This is Cytochrome P450 88A1 (CYP88A1) from Zea mays (Maize).